We begin with the raw amino-acid sequence, 206 residues long: Large ribosomal subunit protein bL25 (206 aa).

Belongs to the bacterial ribosomal protein bL25 family. CTC subfamily. In terms of assembly, part of the 50S ribosomal subunit; part of the 5S rRNA/L5/L18/L25 subcomplex. Contacts the 5S rRNA. Binds to the 5S rRNA independently of L5 and L18.

This is one of the proteins that binds to the 5S RNA in the ribosome where it forms part of the central protuberance. The protein is Large ribosomal subunit protein bL25 of Bartonella henselae (strain ATCC 49882 / DSM 28221 / CCUG 30454 / Houston 1) (Rochalimaea henselae).